Here is a 491-residue protein sequence, read N- to C-terminus: Chromosomal replication initiator protein DnaA (491 aa).

The tract at residues 1-69 (MTTWDKCLKK…TIQECHGNDL (69 aa)) is domain I, interacts with DnaA modulators. The segment at 69 to 154 (LIIEYSNKKF…KEDEEYSFGL (86 aa)) is domain II. A domain III, AAA+ region region spans residues 155–371 (PLKEKYVFDS…GALNRVLTTS (217 aa)). The ATP site is built by Gly199, Gly201, Lys202, and Thr203. A domain IV, binds dsDNA region spans residues 372 to 491 (KFNHKDPTIE…YELLLDKISR (120 aa)).

This sequence belongs to the DnaA family. In terms of assembly, oligomerizes as a right-handed, spiral filament on DNA at oriC.

It localises to the cytoplasm. Plays an essential role in the initiation and regulation of chromosomal replication. ATP-DnaA binds to the origin of replication (oriC) to initiate formation of the DNA replication initiation complex once per cell cycle. Binds the DnaA box (a 9 base pair repeat at the origin) and separates the double-stranded (ds)DNA. Forms a right-handed helical filament on oriC DNA; dsDNA binds to the exterior of the filament while single-stranded (ss)DNA is stabiized in the filament's interior. The ATP-DnaA-oriC complex binds and stabilizes one strand of the AT-rich DNA unwinding element (DUE), permitting loading of DNA polymerase. After initiation quickly degrades to an ADP-DnaA complex that is not apt for DNA replication. Binds acidic phospholipids. The chain is Chromosomal replication initiator protein DnaA from Francisella tularensis subsp. holarctica (strain OSU18).